A 2364-amino-acid polypeptide reads, in one-letter code: Cytotoxin-L (2364 aa).

A four-helical bundle region spans residues 1-91 (MNLVNKAQLQ…EVLELKNNSL (91 aa)). Positions 96–468 (KNLHFIWIGG…APDVRSTINL (373 aa)) constitute a GT44 domain. The tract at residues 96-468 (KNLHFIWIGG…APDVRSTINL (373 aa)) is glucosyltransferase region. Residues 101 to 103 (IWI), Asn-139, 265 to 270 (LAAASD), and 286 to 288 (DVD) each bind UDP-alpha-D-glucose. The Mg(2+) site is built by Asp-288, Glu-515, and Ser-518. 518-520 (SLW) is a UDP-alpha-D-glucose binding site. An autoprocessing region region spans residues 544-799 (GEDDNLDFAQ…KSKYLHELST (256 aa)). Zn(2+) contacts are provided by Glu-545 and Asp-546. Positions 567–774 (LSSMKTRNKE…EESIIKDISS (208 aa)) constitute a Peptidase C80 domain. 1D-myo-inositol hexakisphosphate contacts are provided by Tyr-577, Lys-600, and Lys-647. Zn(2+) is bound at residue His-653. Residue His-653 is the For protease activity of the active site. Catalysis depends on Cys-698, which acts as the Nucleophile; for protease activity. A Zn(2+)-binding site is contributed by His-757. 1D-myo-inositol hexakisphosphate-binding residues include Lys-764, Lys-775, and Lys-792. The interval 800 to 1500 (LLQEIRNNAN…ESIIRNIYMP (701 aa)) is translocation region. Interaction with host SEMA6A and SEMA6B stretches follow at residues 1433–1438 (CMKLIE), 1466–1471 (DNETKY), 1484–1495 (FTAEFSNESIIR), 1504–1511 (NLFIYSSK), and 1596–1601 (YNNLDP). 20 Cell wall-binding repeats span residues 1813 to 1832 (EFGL…FGNM), 1833 to 1852 (VSGL…PKNN), 1854 to 1873 (ITGF…TKSG), 1876 to 1895 (SIGE…QGIL), 1926 to 1945 (FIGK…NYRA), 1946 to 1965 (AVEW…KTGE), 1967 to 1986 (LKGL…NGIM), 1987 to 2006 (QTGF…DGVM), 2007 to 2026 (QVGY…NGER), 2057 to 2076 (YNGI…SNTA), 2077 to 2097 (VVGW…NRAE), 2099 to 2118 (CIGL…NGIR), 2119 to 2138 (QLGF…SGKI), 2139 to 2158 (ELGY…SGLV), 2209 to 2224 (ETGW…YFDP), 2227 to 2249 (KKAY…NGIM), 2250 to 2269 (RTGL…DGKM), 2270 to 2289 (QFGY…DGKM), 2320 to 2339 (YTGW…EYIA), and 2340 to 2359 (ATGS…DTAE). The receptor-binding (CROPS) region stretch occupies residues 1835–2364 (GLIYINDSLY…PDTAELVVSE (530 aa)).

Belongs to the clostridial glucosylating toxin (LCGT) family. In terms of assembly, homomultimer; forms an inactive homomultimer at pH 8, which dissociates at pH 4, leading to cytotoxicity. Interacts with host SEMA6A; interaction promotes toxin entry into host cell. Interacts with host SEMA6B; interaction promotes toxin entry into host cell. Zn(2+) is required as a cofactor. It depends on Mn(2+) as a cofactor. Requires Mg(2+) as cofactor. Undergoes autocatalytic cleavage to release the N-terminal part (Glucosyltransferase TcsL), which constitutes the active part of the toxin, in the host cytosol. 1D-myo-inositol hexakisphosphate-binding (InsP6) activates the peptidase C80 domain and promotes autoprocessing.

It is found in the secreted. The protein localises to the host endosome membrane. Its subcellular location is the host cytoplasm. The protein resides in the host cytosol. It localises to the host cell membrane. The catalysed reaction is L-threonyl-[protein] + UDP-alpha-D-glucose = 3-O-(alpha-D-glucosyl)-L-threonyl-[protein] + UDP + H(+). Protease activity is activated upon binding to 1D-myo-inositol hexakisphosphate (InsP6), which induces conformational reorganization. Precursor of a cytotoxin that targets the vascular endothelium, inducing an anti-inflammatory effect and resulting in lethal toxic shock syndrome. TcsL constitutes the main toxin that mediates the pathology of P.sordellii infection, an anaerobic Gram-positive bacterium found in soil and in the gastrointestinal and vaginal tracts of animals and humans; although the majority of carriers are asymptomatic, pathogenic P.sordellii infections arise rapidly and are highly lethal. This form constitutes the precursor of the toxin: it enters into host cells and mediates autoprocessing to release the active toxin (Glucosyltransferase TcsL) into the host cytosol. Targets vascular endothelium by binding to the semaphorin proteins SEMA6A and SEMA6B, and enters host cells via clathrin-mediated endocytosis. Once entered into host cells, acidification in the endosome promotes the membrane insertion of the translocation region and formation of a pore, leading to translocation of the GT44 and peptidase C80 domains across the endosomal membrane. This activates the peptidase C80 domain and autocatalytic processing, releasing the N-terminal part (Glucosyltransferase TcsL), which constitutes the active part of the toxin, in the cytosol. Functionally, active form of the toxin, which is released into the host cytosol following autoprocessing and inactivates small GTPases. Acts by mediating monoglucosylation of small GTPases of the Ras (H-Ras/HRAS, K-Ras/KRAS, N-Ras/NRAS and Ral/RALA) family in host cells at the conserved threonine residue located in the switch I region ('Thr-37/35'), using UDP-alpha-D-glucose as the sugar donor. Also able to catalyze monoglucosylation of some members of the Rho family (Rac1 and Rap2A), but with less efficiency than with Ras proteins. Monoglucosylation of host small GTPases completely prevents the recognition of the downstream effector, blocking the GTPases in their inactive form and leading to apoptosis. Induces an anti-inflammatory effect, mainly by inactivating Ras proteins which results in blockage of the cell cycle and killing of immune cells. The absence or moderate local inflammatory response allows C.sordellii spreading in deep tissues, production of toxin which is released in the general circulation and causes a toxic shock syndrome. The protein is Cytotoxin-L of Paraclostridium sordellii (Clostridium sordellii).